The chain runs to 738 residues: Interleukin-12 receptor subunit beta-1 (738 aa).

The N-terminal stretch at 1-19 is a signal peptide; it reads MDMMGLAGTSKHITFLLLC. At 20 to 565 the chain is on the extracellular side; it reads QLGASGPGDG…QRFSFEVQIS (546 aa). Fibronectin type-III domains lie at 47-152, 152-258, 259-359, 360-465, and 469-565; these read GPRN…TPPL, LGHI…PEVL, PQAK…LPAQ, ELTE…GNAS, and TPRH…VQIS. N-linked (GlcNAc...) asparagine glycosylation occurs at N50. An intrachain disulfide couples C53 to C63. N-linked (GlcNAc...) asparagine glycans are attached at residues N73, N86, N130, N144, N169, and N188. The WSXWS motif motif lies at 244 to 248; it reads WSDWS. N330, N368, N374, N401, N463, and N477 each carry an N-linked (GlcNAc...) asparagine glycan. The helical transmembrane segment at 566-591 threads the bilayer; it reads RLSIIFASLGSFASVLLVGSLGYIGL. Residues 592–738 lie on the Cytoplasmic side of the membrane; it reads NRAAWHLCPP…PGPPTLGQEA (147 aa). A Box 1 motif motif is present at residues 598–606; that stretch reads LCPPLPTPC.

The protein belongs to the type I cytokine receptor family. Type 2 subfamily. Dimer or oligomer; disulfide-linked. Interacts with IL12RB2 to form the high affinity IL12 receptor. Heterodimer with IL23R; in presence of IL23. The heterodimer forms the IL23 receptor.

The protein localises to the membrane. Functions as an interleukin receptor which binds interleukin-12 with low affinity and is involved in IL12 transduction. Associated with IL12RB2 it forms a functional, high affinity receptor for IL12. Also associates with IL23R to form the interleukin-23 receptor which functions in IL23 signal transduction probably through activation of the Jak-Stat signaling cascade. In Mus musculus (Mouse), this protein is Interleukin-12 receptor subunit beta-1 (Il12rb1).